Here is a 493-residue protein sequence, read N- to C-terminus: MANYFNSLNLRQQLAQLSQCRFMDRSEFENGCDYIKGWNIVILGCGAQGLNQGLNMRDSGLNISYALRAEAIAEKRASWKKATDNGFTVGTFEELIPQADLVLNLTPDKQHSNVVNTVMPLMKQGATLSYSHGFNIVEEGMQVRPDITVIMVAPKCPGTEVREEYKRGFGVPTLIAVHPENDPRGDGLEIAKAYASATGGDRAGVLHSSFIAEVKSDLMGEQTILCGMLQTSAILGYEKMVADGVEPGYAAKLIQQGLETITEALKQGGITNMMDRLSNPAKIKAFDMAEELKGILAPLFEKHMDDIISGEFSRTMMADWANDDANLLRWRAETNETAFENAPSSNEHIDEQTYFDKGIFLVAMIKAGVELAFDTMVDAGIIEESAYYESLHETPLIANTIARKRLYEMNVVISDTAEYGCYLFNHAAVPLLRDYVKSMSAEYLGGGLKDSSNAVDNVRLIEVNQAIRNTAVEFIGEELRGYMKDMKRISAAQ.

Residues 17 to 208 (LSQCRFMDRS…GGDRAGVLHS (192 aa)) form the KARI N-terminal Rossmann domain. NADP(+) contacts are provided by residues 45 to 48 (CGAQ), R68, R76, S78, and 108 to 110 (DKQ). H132 is an active-site residue. G158 lines the NADP(+) pocket. KARI C-terminal knotted domains follow at residues 209–344 (SFIA…NAPS) and 345–486 (SNEH…MKDM). Mg(2+) contacts are provided by D217, E221, E389, and E393. Residue S414 participates in substrate binding.

This sequence belongs to the ketol-acid reductoisomerase family. Requires Mg(2+) as cofactor.

It catalyses the reaction (2R)-2,3-dihydroxy-3-methylbutanoate + NADP(+) = (2S)-2-acetolactate + NADPH + H(+). It carries out the reaction (2R,3R)-2,3-dihydroxy-3-methylpentanoate + NADP(+) = (S)-2-ethyl-2-hydroxy-3-oxobutanoate + NADPH + H(+). It participates in amino-acid biosynthesis; L-isoleucine biosynthesis; L-isoleucine from 2-oxobutanoate: step 2/4. It functions in the pathway amino-acid biosynthesis; L-valine biosynthesis; L-valine from pyruvate: step 2/4. Involved in the biosynthesis of branched-chain amino acids (BCAA). Catalyzes an alkyl-migration followed by a ketol-acid reduction of (S)-2-acetolactate (S2AL) to yield (R)-2,3-dihydroxy-isovalerate. In the isomerase reaction, S2AL is rearranged via a Mg-dependent methyl migration to produce 3-hydroxy-3-methyl-2-ketobutyrate (HMKB). In the reductase reaction, this 2-ketoacid undergoes a metal-dependent reduction by NADPH to yield (R)-2,3-dihydroxy-isovalerate. In Shewanella amazonensis (strain ATCC BAA-1098 / SB2B), this protein is Ketol-acid reductoisomerase (NADP(+)).